The chain runs to 90 residues: Small ribosomal subunit protein uS17 (90 aa).

The protein belongs to the universal ribosomal protein uS17 family. In terms of assembly, part of the 30S ribosomal subunit.

In terms of biological role, one of the primary rRNA binding proteins, it binds specifically to the 5'-end of 16S ribosomal RNA. This is Small ribosomal subunit protein uS17 from Burkholderia mallei (strain NCTC 10247).